We begin with the raw amino-acid sequence, 97 residues long: DNA-binding protein HU (97 aa).

Belongs to the bacterial histone-like protein family. Has been isolated in complexes with 5S rRNA and bL25, and with 5S rRNA, bL25 and uL5. Homodimer.

In terms of biological role, histone-like DNA-binding protein which is capable of wrapping DNA to stabilize it, and thus to prevent its denaturation under extreme environmental conditions. This chain is DNA-binding protein HU, found in Thermus thermophilus (strain ATCC 27634 / DSM 579 / HB8).